We begin with the raw amino-acid sequence, 251 residues long: Adenosylcobinamide-GDP ribazoletransferase (251 aa).

A run of 7 helical transmembrane segments spans residues 36-56 (LYPF…FVLS), 60-80 (VPIM…TGFL), 110-130 (VGAF…AGMF), 141-161 (ILIF…VSQE), 181-201 (EIIL…TLGI), 202-222 (NYLI…LKVK), and 231-251 (DVAG…LGII).

It belongs to the CobS family. Mg(2+) serves as cofactor.

Its subcellular location is the cell membrane. It catalyses the reaction alpha-ribazole + adenosylcob(III)inamide-GDP = adenosylcob(III)alamin + GMP + H(+). The enzyme catalyses alpha-ribazole 5'-phosphate + adenosylcob(III)inamide-GDP = adenosylcob(III)alamin 5'-phosphate + GMP + H(+). It functions in the pathway cofactor biosynthesis; adenosylcobalamin biosynthesis; adenosylcobalamin from cob(II)yrinate a,c-diamide: step 7/7. In terms of biological role, joins adenosylcobinamide-GDP and alpha-ribazole to generate adenosylcobalamin (Ado-cobalamin). Also synthesizes adenosylcobalamin 5'-phosphate from adenosylcobinamide-GDP and alpha-ribazole 5'-phosphate. The chain is Adenosylcobinamide-GDP ribazoletransferase from Clostridium perfringens (strain ATCC 13124 / DSM 756 / JCM 1290 / NCIMB 6125 / NCTC 8237 / Type A).